Consider the following 226-residue polypeptide: Transmembrane gamma-carboxyglutamic acid protein 4 (226 aa).

An N-terminal signal peptide occupies residues 1–17 (MFPLLIVLSQLPRLTLA). Residues 18–49 (VPHCIRSLKDSEHAPEEVFASKEAANIFMHRR) constitute a propeptide that is removed on maturation. The Extracellular portion of the chain corresponds to 50-113 (LLNNRFDLEL…GSDVNKEKID (64 aa)). A Gla domain is found at 52 to 98 (NNRFDLELFTPGDLERECYEEFCSYEEAREILGDDENTIKFWQTYSI). Cys69 and Cys74 are disulfide-bonded. Glu72 carries the 4-carboxyglutamate modification. Residues 114-134 (VMSLLTGLIVAGVFLVIFGLV) traverse the membrane as a helical segment. The Cytoplasmic portion of the chain corresponds to 135 to 226 (GYYVCLTKCK…FKKSMSLPSH (92 aa)). Ser164 carries the post-translational modification Phosphoserine. Positions 186-189 (LPSY) match the LPXY motif; mediates binding to WW domain-containing proteins motif. The PPXY motif; mediates binding to WW domain-containing proteins signature appears at 204–207 (PPPY).

It belongs to the commissureless family. In terms of assembly, interacts (via cytoplasmic domain) with WW domain-containing proteins MAGI1, MAGI3, NEDD4, NEDD4L, WWTR1/TAZ and YAP1. Post-translationally, gamma-carboxyglutamate residues are formed by vitamin K dependent carboxylation. These residues are essential for the binding of calcium.

It is found in the endoplasmic reticulum-Golgi intermediate compartment membrane. The protein localises to the cell membrane. Functionally, may control axon guidance across the CNS. Prevents the delivery of ROBO1 at the cell surface and down-regulates its expression. The chain is Transmembrane gamma-carboxyglutamic acid protein 4 (Prrg4) from Mus musculus (Mouse).